The chain runs to 140 residues: MASKVDYQSGKKHGLQLKNQESELDSIAAEFAGELDEATLSKYKTQFMSYDINNSGDIDHYELQLLMEKINQPKTYLELKKMIEQVDSTGKGAINFRDFIKMMTGKTSSILQKILMFEEMGKKSEQPKGIPQKRSISDLP.

2 consecutive EF-hand domains span residues alanine 38 to proline 73 and lysine 74 to serine 109. Aspartate 51, asparagine 53, serine 55, aspartate 57, and glutamate 62 together coordinate Ca(2+).

In Dictyostelium discoideum (Social amoeba), this protein is Calcium-binding protein B (cbpB).